Consider the following 202-residue polypeptide: Phosphoenolpyruvate guanylyltransferase (202 aa).

Phosphoenolpyruvate-binding residues include T140, G156, and S159.

It belongs to the CofC family.

It carries out the reaction phosphoenolpyruvate + GTP + H(+) = enolpyruvoyl-2-diphospho-5'-guanosine + diphosphate. Its pathway is cofactor biosynthesis; coenzyme F420 biosynthesis. Guanylyltransferase that catalyzes the activation of phosphoenolpyruvate (PEP) as enolpyruvoyl-2-diphospho-5'-guanosine, via the condensation of PEP with GTP. It is involved in the biosynthesis of coenzyme F420, a hydride carrier cofactor. The chain is Phosphoenolpyruvate guanylyltransferase from Chloroflexus aggregans (strain MD-66 / DSM 9485).